The primary structure comprises 384 residues: MQDKAMLMIPGPTPVPESVLLSLGKHPIGHRSGEFSQIMAAMTAGIKWLHQTQNEVLILAASGTGAMEAGIINFLSAGDRVVVGCNGKFGDRWGEVCDAYGLTTERISAPWGQPLNPDDFKAVLDGHRQKPSKAVIVTHSETSTGVINDLEAINRHVKAHGQALIIVDAVTSLGAVSVPIDEWGLDVVGSGSQKGYMIPPGLAFVSVSPKAWEAYKTATLPKFYLDLGKYRKDAAKHTTPFTPPVNLFFALKTALEMMQAEGLEAIFQRHQRLMQATRAAMKALNLPLYAADSCASPAITAVAPQGVEAENIRSLMKKRFDIALAGGQDHLKGQIFRIGHLGFVGDRDILAAVSALEAVLAELGYTNFTPGAGVAAASRVLSTA.

An N6-(pyridoxal phosphate)lysine modification is found at lysine 194.

The protein belongs to the class-V pyridoxal-phosphate-dependent aminotransferase family. In terms of assembly, heterodimer of a large and a small subunit. The cofactor is pyridoxal 5'-phosphate.

It localises to the cytoplasm. In terms of biological role, soluble hydrogenase catalyzes both production and consumption of hydrogen from suitable artificial electron donors or acceptors. This subunit catalyzes the tritium-exchange activity. The polypeptide is Soluble hydrogenase, small subunit (Synechococcus sp. (strain PCC 6716)).